A 525-amino-acid chain; its full sequence is GMP synthase [glutamine-hydrolyzing] (525 aa).

Positions 9–207 (RILILDFGSQ…VHEICGCPAD (199 aa)) constitute a Glutamine amidotransferase type-1 domain. Catalysis depends on C86, which acts as the Nucleophile. Catalysis depends on residues H181 and E183. The 193-residue stretch at 208-400 (WTPGNIVDDL…LGLPADMVYR (193 aa)) folds into the GMPS ATP-PPase domain. 235 to 241 (SGGVDSS) contacts ATP.

In terms of assembly, homodimer.

It catalyses the reaction XMP + L-glutamine + ATP + H2O = GMP + L-glutamate + AMP + diphosphate + 2 H(+). It functions in the pathway purine metabolism; GMP biosynthesis; GMP from XMP (L-Gln route): step 1/1. Functionally, catalyzes the synthesis of GMP from XMP. The chain is GMP synthase [glutamine-hydrolyzing] from Alkalilimnicola ehrlichii (strain ATCC BAA-1101 / DSM 17681 / MLHE-1).